Here is a 310-residue protein sequence, read N- to C-terminus: Quinolinate synthase (310 aa).

Iminosuccinate contacts are provided by histidine 27 and serine 44. A [4Fe-4S] cluster-binding site is contributed by cysteine 89. Residues 115 to 117 and serine 132 contribute to the iminosuccinate site; that span reads YVN. Cysteine 175 provides a ligand contact to [4Fe-4S] cluster. Residues 201-203 and threonine 222 each bind iminosuccinate; that span reads HPE. Cysteine 267 provides a ligand contact to [4Fe-4S] cluster.

The protein belongs to the quinolinate synthase family. Type 2 subfamily. [4Fe-4S] cluster is required as a cofactor.

It is found in the cytoplasm. It carries out the reaction iminosuccinate + dihydroxyacetone phosphate = quinolinate + phosphate + 2 H2O + H(+). Its pathway is cofactor biosynthesis; NAD(+) biosynthesis; quinolinate from iminoaspartate: step 1/1. In terms of biological role, catalyzes the condensation of iminoaspartate with dihydroxyacetone phosphate to form quinolinate. This Thermus thermophilus (strain ATCC 27634 / DSM 579 / HB8) protein is Quinolinate synthase.